Reading from the N-terminus, the 616-residue chain is Fatty acyl-CoA reductase 2, chloroplastic (616 aa).

Residues methionine 1–valine 14 constitute a chloroplast transit peptide. The NAD(P)H-binding motif lies at phenylalanine 133–alanine 143. Residues tyrosine 357 and lysine 361 contribute to the active site.

This sequence belongs to the fatty acyl-CoA reductase family. Expressed in the tapetum of anthers.

Its subcellular location is the plastid. It localises to the chloroplast. The catalysed reaction is a long-chain fatty acyl-CoA + 2 NADPH + 2 H(+) = a long-chain primary fatty alcohol + 2 NADP(+) + CoA. It catalyses the reaction hexadecanoyl-CoA + 2 NADPH + 2 H(+) = hexadecan-1-ol + 2 NADP(+) + CoA. It carries out the reaction hexadecanoyl-[ACP] + 2 NADPH + 2 H(+) = hexadecan-1-ol + holo-[ACP] + 2 NADP(+). Its function is as follows. Catalyzes the reduction of fatty acyl-CoA and -ACP (acyl carrier protein) substrates to fatty alcohols. Triggers the accumulation of C16 and C18 fatty alcohols; converts palmitoyl-acyl carrier protein to the corresponding C16:0 alcohol with NAD(P)H as electron donor, but seems inactive toward palmitoyl- or other acyl-coenzyme A. Also triggers the formation of some C16:0 aldehydes. Involved in the synthesis of the lipid component in sporopollenin. Required for exine patterning of pollen grain by mediating the formation of pollen wall substances. This chain is Fatty acyl-CoA reductase 2, chloroplastic, found in Arabidopsis thaliana (Mouse-ear cress).